A 333-amino-acid chain; its full sequence is Protein pelota homolog (333 aa).

It belongs to the eukaryotic release factor 1 family. Pelota subfamily. As to quaternary structure, monomer. A divalent metal cation is required as a cofactor.

It localises to the cytoplasm. Its function is as follows. May function in recognizing stalled ribosomes, interact with stem-loop structures in stalled mRNA molecules, and effect endonucleolytic cleavage of the mRNA. May play a role in the release non-functional ribosomes and degradation of damaged mRNAs. Has endoribonuclease activity. The sequence is that of Protein pelota homolog from Pyrobaculum arsenaticum (strain DSM 13514 / JCM 11321 / PZ6).